The chain runs to 303 residues: 4-hydroxy-3-methylbut-2-enyl diphosphate reductase (303 aa).

Cys-12 is a [4Fe-4S] cluster binding site. Positions 42 and 75 each coordinate (2E)-4-hydroxy-3-methylbut-2-enyl diphosphate. Dimethylallyl diphosphate-binding residues include His-42 and His-75. His-42 and His-75 together coordinate isopentenyl diphosphate. Cys-97 contributes to the [4Fe-4S] cluster binding site. His-125 contributes to the (2E)-4-hydroxy-3-methylbut-2-enyl diphosphate binding site. His-125 is a dimethylallyl diphosphate binding site. Residue His-125 participates in isopentenyl diphosphate binding. The Proton donor role is filled by Glu-127. Ser-164 contributes to the (2E)-4-hydroxy-3-methylbut-2-enyl diphosphate binding site. [4Fe-4S] cluster is bound at residue Cys-192. 4 residues coordinate (2E)-4-hydroxy-3-methylbut-2-enyl diphosphate: Ser-220, Ser-221, Asn-222, and Ser-264. Dimethylallyl diphosphate contacts are provided by Ser-220, Ser-221, Asn-222, and Ser-264. The isopentenyl diphosphate site is built by Ser-220, Ser-221, Asn-222, and Ser-264.

This sequence belongs to the IspH family. The cofactor is [4Fe-4S] cluster.

The catalysed reaction is isopentenyl diphosphate + 2 oxidized [2Fe-2S]-[ferredoxin] + H2O = (2E)-4-hydroxy-3-methylbut-2-enyl diphosphate + 2 reduced [2Fe-2S]-[ferredoxin] + 2 H(+). It carries out the reaction dimethylallyl diphosphate + 2 oxidized [2Fe-2S]-[ferredoxin] + H2O = (2E)-4-hydroxy-3-methylbut-2-enyl diphosphate + 2 reduced [2Fe-2S]-[ferredoxin] + 2 H(+). It functions in the pathway isoprenoid biosynthesis; dimethylallyl diphosphate biosynthesis; dimethylallyl diphosphate from (2E)-4-hydroxy-3-methylbutenyl diphosphate: step 1/1. It participates in isoprenoid biosynthesis; isopentenyl diphosphate biosynthesis via DXP pathway; isopentenyl diphosphate from 1-deoxy-D-xylulose 5-phosphate: step 6/6. In terms of biological role, catalyzes the conversion of 1-hydroxy-2-methyl-2-(E)-butenyl 4-diphosphate (HMBPP) into a mixture of isopentenyl diphosphate (IPP) and dimethylallyl diphosphate (DMAPP). Acts in the terminal step of the DOXP/MEP pathway for isoprenoid precursor biosynthesis. The chain is 4-hydroxy-3-methylbut-2-enyl diphosphate reductase from Neorickettsia sennetsu (strain ATCC VR-367 / Miyayama) (Ehrlichia sennetsu).